The following is a 409-amino-acid chain: Argininosuccinate synthase (409 aa).

ATP-binding positions include 11 to 19 (AYSGGLDTS) and alanine 38. Residues tyrosine 91 and serine 96 each contribute to the L-citrulline site. Residue glycine 121 coordinates ATP. Threonine 123, asparagine 127, and aspartate 128 together coordinate L-aspartate. Asparagine 127 contacts L-citrulline. Residues arginine 131, serine 182, serine 191, glutamate 267, and tyrosine 279 each contribute to the L-citrulline site.

It belongs to the argininosuccinate synthase family. Type 1 subfamily. In terms of assembly, homotetramer.

Its subcellular location is the cytoplasm. It carries out the reaction L-citrulline + L-aspartate + ATP = 2-(N(omega)-L-arginino)succinate + AMP + diphosphate + H(+). It functions in the pathway amino-acid biosynthesis; L-arginine biosynthesis; L-arginine from L-ornithine and carbamoyl phosphate: step 2/3. This chain is Argininosuccinate synthase, found in Nitrobacter hamburgensis (strain DSM 10229 / NCIMB 13809 / X14).